The following is a 22-amino-acid chain: Caerin-3.1 (22 aa).

Position 22 is a lysine amide (K22).

The protein belongs to the frog skin active peptide (FSAP) family. Caerin subfamily. As to expression, expressed by the skin dorsal glands.

The protein resides in the secreted. Functionally, antibacterial peptide with narrow spectrum of activity. Inhibits the formation of NO by neuronal nitric oxide synthase. This chain is Caerin-3.1, found in Litoria rothii (Roth's tree frog).